The sequence spans 141 residues: Large ribosomal subunit protein uL11 (141 aa).

This sequence belongs to the universal ribosomal protein uL11 family. Part of the ribosomal stalk of the 50S ribosomal subunit. Interacts with L10 and the large rRNA to form the base of the stalk. L10 forms an elongated spine to which L12 dimers bind in a sequential fashion forming a multimeric L10(L12)X complex. One or more lysine residues are methylated.

Functionally, forms part of the ribosomal stalk which helps the ribosome interact with GTP-bound translation factors. The chain is Large ribosomal subunit protein uL11 from Exiguobacterium sp. (strain ATCC BAA-1283 / AT1b).